The sequence spans 337 residues: DNA repair and recombination protein RadA (337 aa).

Residue 115–122 coordinates ATP; the sequence is GEFGSGKT.

Belongs to the eukaryotic RecA-like protein family.

Its function is as follows. Involved in DNA repair and in homologous recombination. Binds and assemble on single-stranded DNA to form a nucleoprotein filament. Hydrolyzes ATP in a ssDNA-dependent manner and promotes DNA strand exchange between homologous DNA molecules. The polypeptide is DNA repair and recombination protein RadA (radA) (Archaeoglobus fulgidus (strain ATCC 49558 / DSM 4304 / JCM 9628 / NBRC 100126 / VC-16)).